A 307-amino-acid chain; its full sequence is Myeloid-associated differentiation marker-like protein 2 (307 aa).

MARVEL domains follow at residues 17-154 (AVTS…ARPG) and 159-303 (YMAT…RIRF). The next 7 membrane-spanning stretches (helical) occupy residues 53–73 (FCMAAWGFCFAVSALVVACEF), 90–110 (AFAMLATLLCATAAVLYPLYF), 129–149 (LAASVFAGLLFLAYAVEVALT), 163–183 (VSGLLKIVQAFVACIIFGALV), 198–218 (VAVYSLCFLATVAVVALSVMG), 229–249 (RLVVVYTFLAVLLYLSAAVIW), and 278–298 (LVVAIFTYVNLLLYVVDLAYS).

This sequence belongs to the MAL family.

It is found in the membrane. The protein is Myeloid-associated differentiation marker-like protein 2 (MYADML2) of Homo sapiens (Human).